The sequence spans 142 residues: Large ribosomal subunit protein uL11 (142 aa).

The protein belongs to the universal ribosomal protein uL11 family. As to quaternary structure, part of the ribosomal stalk of the 50S ribosomal subunit. Interacts with L10 and the large rRNA to form the base of the stalk. L10 forms an elongated spine to which L12 dimers bind in a sequential fashion forming a multimeric L10(L12)X complex. Post-translationally, one or more lysine residues are methylated.

Its function is as follows. Forms part of the ribosomal stalk which helps the ribosome interact with GTP-bound translation factors. In Sinorhizobium medicae (strain WSM419) (Ensifer medicae), this protein is Large ribosomal subunit protein uL11.